A 429-amino-acid polypeptide reads, in one-letter code: Enolase (429 aa).

Gln-162 is a (2R)-2-phosphoglycerate binding site. The active-site Proton donor is the Glu-204. 3 residues coordinate Mg(2+): Asp-241, Glu-286, and Asp-313. Residues Lys-338, Arg-367, Ser-368, and Lys-389 each coordinate (2R)-2-phosphoglycerate. The Proton acceptor role is filled by Lys-338.

The protein belongs to the enolase family. Requires Mg(2+) as cofactor.

Its subcellular location is the cytoplasm. It is found in the secreted. The protein resides in the cell surface. The catalysed reaction is (2R)-2-phosphoglycerate = phosphoenolpyruvate + H2O. It functions in the pathway carbohydrate degradation; glycolysis; pyruvate from D-glyceraldehyde 3-phosphate: step 4/5. Catalyzes the reversible conversion of 2-phosphoglycerate (2-PG) into phosphoenolpyruvate (PEP). It is essential for the degradation of carbohydrates via glycolysis. This chain is Enolase, found in Shouchella clausii (strain KSM-K16) (Alkalihalobacillus clausii).